The sequence spans 104 residues: Signal recognition particle 19 kDa protein (104 aa).

The protein belongs to the SRP19 family. Part of the signal recognition particle protein translocation system, which is composed of SRP and FtsY. Archaeal SRP consists of a 7S RNA molecule of 300 nucleotides and two protein subunits: SRP54 and SRP19.

The protein localises to the cytoplasm. Functionally, involved in targeting and insertion of nascent membrane proteins into the cytoplasmic membrane. Binds directly to 7S RNA and mediates binding of the 54 kDa subunit of the SRP. The protein is Signal recognition particle 19 kDa protein of Archaeoglobus fulgidus (strain ATCC 49558 / DSM 4304 / JCM 9628 / NBRC 100126 / VC-16).